Here is an 800-residue protein sequence, read N- to C-terminus: MDFHSVLRMAAAKPGPDGVMKRYSLAVGPPRKDPKVKGVNSAAVQAFLRKKDQEIQNKEVEAKRKKEGLLAKRKELKHDRKARAMASRTKDNFRGYNGIPVEEKPKKHKGSGLEEGPNESMQSTEEDEEYMTEEELYEYSQSESEREEEQEEMPPQKVAKAAPGKKPPPPALNFTELLRLAERKQHEPVEVIRPLKKEERLRTAEELKELEFLERKAQKADRKDPMRNGQVVKISKGSGDKYYSLKGSHSVEKRSHENSKSSSTEQNGTFRKSSSDNRSREEKSGSVFHTKDSKFPTKSSSAKDCGAKGFRPSATGDCKNRNDSTRASGSTSLRPSSGGSSSVSGRPSGSSEKPGSSSGKPMGGSGSSSARSSSGSGKPTGATGSGKPTGASGSGSARSVGESGSRSGKPTGASGSGLARSVGASGSGSGKPTGATDSGRPTGVSGSGSARSVGASGSGKPTGASVSGSARSVGASGSGKPTGASGSGSARSVGASRSVSGKPTGASGSGKPTGAPGASSGKPAGVSGSVSSFARPRSNSSMAPAKPAASSGSARPSSSGTPRASSTGNSSSNYSRQASSSGAVRPSSGPPTGGTPKGPSPRPGTGPNSVRHNTTSISVSARSSLGSGPGRPVAASATGQSAMAKPKCTVVAETISSKNFVPKSINGHMNGMRSAVPPGHRPNMQPPGRPLPPITSSYKRRIDDDEYDSEMDDFIDDGGECQDEISKHIREIFGYDRNRYRDESDYALRYMESSFREQQKEEARSLRLGIQEDLEELRREEEELKQKAKQLKSAKKMKSR.

Positions 1–687 (MDFHSVLRMA…PGHRPNMQPP (687 aa)) are important for interaction with DNA. The stretch at 53–82 (QEIQNKEVEAKRKKEGLLAKRKELKHDRKA) forms a coiled coil. Disordered stretches follow at residues 70-173 (LAKR…PALN), 197-646 (KEER…MAKP), and 661-698 (VPKS…TSSY). Positions 124–137 (TEEDEEYMTEEELY) are enriched in acidic residues. Over residues 155–164 (PQKVAKAAPG) the composition is skewed to low complexity. Residues 196-224 (KKEERLRTAEELKELEFLERKAQKADRKD) adopt a coiled-coil conformation. Basic and acidic residues-rich tracts occupy residues 197-226 (KEER…KDPM) and 249-259 (HSVEKRSHENS). Over residues 260–272 (KSSSTEQNGTFRK) the composition is skewed to polar residues. The span at 273–295 (SSSDNRSREEKSGSVFHTKDSKF) shows a compositional bias: basic and acidic residues. 5 stretches are compositionally biased toward low complexity: residues 328–360 (SGST…SSGK), 367–377 (SSSARSSSGSG), 390–424 (GASG…SVGA), 443–501 (GVSG…SVSG), and 514–581 (GAPG…ASSS). Residues 608-626 (NSVRHNTTSISVSARSSLG) show a composition bias toward polar residues. The segment covering 684 to 693 (MQPPGRPLPP) has biased composition (pro residues). Residues 688-800 (GRPLPPITSS…LKSAKKMKSR (113 aa)) form an important for interaction with histones region. Positions 756-800 (REQQKEEARSLRLGIQEDLEELRREEEELKQKAKQLKSAKKMKSR) form a coiled coil.

It belongs to the SPT2 family. Interacts with histones. Interacts with a heterotetrameric complex formed by histone H3 and H4, especially when the histone tetramer is not bound to DNA.

The protein resides in the nucleus. It localises to the nucleolus. Functionally, histone chaperone that stabilizes pre-existing histone tetramers and regulates replication-independent histone exchange on chromatin. Required for normal chromatin refolding in the coding region of transcribed genes, and for the suppression of spurious transcription. Binds DNA and histones and promotes nucleosome assembly (in vitro). Facilitates formation of tetrameric histone complexes containing histone H3 and H4. Modulates RNA polymerase 1-mediated transcription. Binds DNA, with a preference for branched DNA species, such as Y-form DNA and Holliday junction DNA. This is Protein SPT2 homolog (spty2d1) from Xenopus laevis (African clawed frog).